Consider the following 99-residue polypeptide: U11-barytoxin-Tl1a (99 aa).

The N-terminal stretch at 1-21 (MKTLVLVAVLGLASLYLLSYA) is a signal peptide. Positions 22-50 (SEVQQISRDEEDFRALMASFGGIFDTEER) are excised as a propeptide. Intrachain disulfides connect cysteine 57/cysteine 71, cysteine 64/cysteine 76, and cysteine 70/cysteine 90.

This sequence belongs to the neurotoxin 10 (Hwtx-1) family. 25 (ICK4) subfamily. In terms of tissue distribution, expressed by the venom gland.

Its subcellular location is the secreted. In terms of biological role, ion channel inhibitor. This is U11-barytoxin-Tl1a from Trittame loki (Brush-footed trapdoor spider).